A 160-amino-acid chain; its full sequence is Transcription antitermination protein NusB (160 aa).

The protein belongs to the NusB family.

Its function is as follows. Involved in transcription antitermination. Required for transcription of ribosomal RNA (rRNA) genes. Binds specifically to the boxA antiterminator sequence of the ribosomal RNA (rrn) operons. This Rhizobium johnstonii (strain DSM 114642 / LMG 32736 / 3841) (Rhizobium leguminosarum bv. viciae) protein is Transcription antitermination protein NusB.